The following is a 102-amino-acid chain: Ribonuclease P protein component 1 (102 aa).

Belongs to the eukaryotic/archaeal RNase P protein component 1 family. In terms of assembly, consists of a catalytic RNA component and at least 4-5 protein subunits.

The protein localises to the cytoplasm. It catalyses the reaction Endonucleolytic cleavage of RNA, removing 5'-extranucleotides from tRNA precursor.. Its function is as follows. Part of ribonuclease P, a protein complex that generates mature tRNA molecules by cleaving their 5'-ends. This chain is Ribonuclease P protein component 1, found in Archaeoglobus fulgidus (strain ATCC 49558 / DSM 4304 / JCM 9628 / NBRC 100126 / VC-16).